A 274-amino-acid polypeptide reads, in one-letter code: uncharacterized protein (274 aa).

Residues 1–21 (MRKLTLLPLLLIITGLLTVQA) form the signal peptide. The helical transmembrane segment at 249 to 266 (TSAFVILTASALIFIYLF) threads the bilayer.

Its subcellular location is the membrane. This is an uncharacterized protein from Archaeoglobus fulgidus (strain ATCC 49558 / DSM 4304 / JCM 9628 / NBRC 100126 / VC-16).